The primary structure comprises 194 residues: Probable nicotinate-nucleotide adenylyltransferase (194 aa).

The protein belongs to the NadD family.

It catalyses the reaction nicotinate beta-D-ribonucleotide + ATP + H(+) = deamido-NAD(+) + diphosphate. The protein operates within cofactor biosynthesis; NAD(+) biosynthesis; deamido-NAD(+) from nicotinate D-ribonucleotide: step 1/1. Catalyzes the reversible adenylation of nicotinate mononucleotide (NaMN) to nicotinic acid adenine dinucleotide (NaAD). The chain is Probable nicotinate-nucleotide adenylyltransferase from Chlorobium luteolum (strain DSM 273 / BCRC 81028 / 2530) (Pelodictyon luteolum).